The primary structure comprises 264 residues: H-2 class II histocompatibility antigen, E-Q beta chain (264 aa).

The first 26 residues, 1–26, serve as a signal peptide directing secretion; it reads MVWLPRVPCVAAVILLLTVLSPPVAL. The beta-1 stretch occupies residues 27-121; sequence VRDSRPWFLE…IFDNFLVRRR (95 aa). The Extracellular segment spans residues 27-225; the sequence is VRDSRPWFLE…KAQSTSAQNK (199 aa). Intrachain disulfides connect Cys-38–Cys-106 and Cys-144–Cys-200. Residue Asn-46 is glycosylated (N-linked (GlcNAc...) asparagine). A beta-2 region spans residues 122–225; it reads VEPTVTVYPT…KAQSTSAQNK (104 aa). Positions 124 to 214 constitute an Ig-like C1-type domain; it reads PTVTVYPTKT…PSLTDPVTVE (91 aa). The chain crosses the membrane as a helical span at residues 226-246; it reads MLSGVGGFVLGLLFLGAGLFI. Over 247–264 the chain is Cytoplasmic; sequence YFRNQKGQSGLQPTGLLS.

It belongs to the MHC class II family.

The protein resides in the membrane. This Mus musculus (Mouse) protein is H-2 class II histocompatibility antigen, E-Q beta chain.